The chain runs to 493 residues: MVKEIKELTPKSVSSSRWYNDLVIKADLAENSAVRGCMVIKPYGYAIWEKIQRQLDEMFKETGHVNAYFPLFIPKSFLNREASHIEGFAKECAIVTHYRLKNDPIGKGIIVDSEAKLEEELIIRPTSESIIWNTYKKWIHSYRDLPILINQWANVVRWEMRTRLFLRTAEFLWQEGHTAHTSKEEAIEETLKILDIYANFVEQYMAIPVTKGVKTPCERFAGATDTYCIETLMQDGKALQAGTSHFLGQNFAKAFDVQFLNKKGKREYVWATSWGVSTRLMGALIMMHSDDNGLVLPPKLAPCQIVIIPVSKDRTSLEDINEKATNIINDFKNLDINVKYDNTDNKKPGWKFAEYELKGIPIRLTLGTRDLENGTIEVSRRDTLTKETISINNITDYANNLLNDIQQNIYQKALDYRSANTVYVDNYDEFKERIEEGGFIMAHWDGTAKTEEQIKKETKATIRCIPLNGDITPGIDMLTGMPSKQRVIFARAY.

Belongs to the class-II aminoacyl-tRNA synthetase family. ProS type 3 subfamily. In terms of assembly, homodimer.

The protein localises to the cytoplasm. It carries out the reaction tRNA(Pro) + L-proline + ATP = L-prolyl-tRNA(Pro) + AMP + diphosphate. In terms of biological role, catalyzes the attachment of proline to tRNA(Pro) in a two-step reaction: proline is first activated by ATP to form Pro-AMP and then transferred to the acceptor end of tRNA(Pro). This chain is Proline--tRNA ligase, found in Azobacteroides pseudotrichonymphae genomovar. CFP2.